The following is a 553-amino-acid chain: Glutamate--tRNA ligase (553 aa).

Positions 41-51 (PSPTGFQHIGG) match the 'HIGH' region motif. The 'KMSKS' region motif lies at 293 to 297 (KLSKR). Residue Lys296 participates in ATP binding.

It belongs to the class-I aminoacyl-tRNA synthetase family. Glutamate--tRNA ligase type 1 subfamily. As to quaternary structure, monomer.

It is found in the cytoplasm. The enzyme catalyses tRNA(Glu) + L-glutamate + ATP = L-glutamyl-tRNA(Glu) + AMP + diphosphate. Its function is as follows. Catalyzes the attachment of glutamate to tRNA(Glu) in a two-step reaction: glutamate is first activated by ATP to form Glu-AMP and then transferred to the acceptor end of tRNA(Glu). The protein is Glutamate--tRNA ligase of Clostridium beijerinckii (strain ATCC 51743 / NCIMB 8052) (Clostridium acetobutylicum).